A 457-amino-acid chain; its full sequence is Cyclic dof factor 2 (457 aa).

Residues 1-130 (MADPAIKLFG…GGTACSQEGK (130 aa)) are disordered. Residues 22-35 (DSSSSYTGFLTETQ) are compositionally biased toward polar residues. Composition is skewed to acidic residues over residues 45–54 (TGDDDDEEMG) and 62–73 (EGDDVGDGGGES). Composition is skewed to basic and acidic residues over residues 74 to 94 (ETDK…RNES) and 106 to 118 (EKTE…KTNE). The Dof-type zinc finger occupies 138-192 (LPCPRCNSMETKFCYYNNYNVNQPRHFCKKCQRYWTAGGTMRNVPVGAGRRKNKS). Cysteine 140, cysteine 143, cysteine 165, and cysteine 168 together coordinate Zn(2+). Disordered stretches follow at residues 334-377 (QPNS…KSKP) and 417-457 (AFRS…HESS). Residues 337-346 (SPSGSNPNSP) are compositionally biased toward low complexity.

In terms of assembly, interacts with ADO2 (via kelch repeats) and ADO3 (via kelch repeats). In terms of tissue distribution, expressed in the vasculature of cotyledons and hypocotyls, leaves and roots.

It is found in the nucleus. Its function is as follows. Transcription factor that binds specifically to a 5'-AA[AG]G-3' consensus core sequence. Regulates a photoperiodic flowering response. Transcriptional repressor of 'CONSTANS' expression. The stability of CDF2 is controlled by 'GIGANTEA' and redundantly by ADO3, ADO2 and/or ADO1. This is Cyclic dof factor 2 (CDF2) from Arabidopsis thaliana (Mouse-ear cress).